The primary structure comprises 777 residues: Biotin sulfoxide reductase (777 aa).

Ser148 provides a ligand contact to Mo-bis(molybdopterin guanine dinucleotide).

Belongs to the prokaryotic molybdopterin-containing oxidoreductase family. Requires Mo-bis(molybdopterin guanine dinucleotide) as cofactor.

It carries out the reaction [thioredoxin]-disulfide + L-methionine + H2O = L-methionine (S)-S-oxide + [thioredoxin]-dithiol. In terms of biological role, this enzyme may serve as a scavenger, allowing the cell to utilize biotin sulfoxide as a biotin source. It reduces a spontaneous oxidation product of biotin, D-biotin D-sulfoxide (BSO or BDS), back to biotin. Also exhibits methionine-(S)-sulfoxide (Met-S-SO) reductase activity, acting specifically on the (S) enantiomer in the free, but not the protein-bound form. It thus plays a role in assimilation of oxidized methionines. The chain is Biotin sulfoxide reductase (bisC) from Escherichia coli (strain K12).